Reading from the N-terminus, the 501-residue chain is Cytochrome P450 90A4 (501 aa).

The helical transmembrane segment at 2-22 (AAAALLLLAAAAAAVVVAMAL) threads the bilayer. A heme-binding site is contributed by Cys-446.

The protein belongs to the cytochrome P450 family. Heme is required as a cofactor. As to expression, highly expressed in shoot apex and inflorenscence. Expressed in roots, stems, leaf blades and leaf sheaths.

The protein resides in the cell membrane. It participates in plant hormone biosynthesis; brassinosteroid biosynthesis. Catalyzes the C23-alpha-hydroxylation step in brassinosteroid biosynthesis. Converts 6-deoxocathasterone to 6-deoxoteasterone in the late C6-oxidation pathway and cathasterone to teasterone (TE) in the early C6-oxidation pathway of brassinolide (BL) biosynthesis. In Oryza sativa subsp. japonica (Rice), this protein is Cytochrome P450 90A4.